Reading from the N-terminus, the 551-residue chain is Glucose-6-phosphate isomerase (551 aa).

Residues 161 to 162, 212 to 217, Gln-356, Glu-360, His-391, and Lys-516 each bind D-glucose 6-phosphate; these read GS and SKTFTT. Glu-360 serves as the catalytic Proton donor. Residues His-391 and Lys-516 contribute to the active site.

This sequence belongs to the GPI family. In terms of assembly, homodimer.

The protein localises to the cytoplasm. Its subcellular location is the cytosol. The catalysed reaction is alpha-D-glucose 6-phosphate = beta-D-fructose 6-phosphate. It functions in the pathway carbohydrate degradation; glycolysis; D-glyceraldehyde 3-phosphate and glycerone phosphate from D-glucose: step 2/4. In terms of biological role, in the cytoplasm, catalyzes the conversion of glucose-6-phosphate to fructose-6-phosphate, the second step in glycolysis, and the reverse reaction during gluconeogenesis. The sequence is that of Glucose-6-phosphate isomerase (gpi1) from Agaricus bisporus (White button mushroom).